Here is a 142-residue protein sequence, read N- to C-terminus: Peptide methionine sulfoxide reductase MsrB (142 aa).

A MsrB domain is found at 2-125 (IKKNKEELND…NSAAIQFIPY (124 aa)). C114 acts as the Nucleophile in catalysis.

The protein belongs to the MsrB Met sulfoxide reductase family.

The enzyme catalyses L-methionyl-[protein] + [thioredoxin]-disulfide + H2O = L-methionyl-(R)-S-oxide-[protein] + [thioredoxin]-dithiol. This is Peptide methionine sulfoxide reductase MsrB from Staphylococcus epidermidis (strain ATCC 35984 / DSM 28319 / BCRC 17069 / CCUG 31568 / BM 3577 / RP62A).